Here is a 101-residue protein sequence, read N- to C-terminus: Small ribosomal subunit protein uS14A (101 aa).

A disordered region spans residues 31-59 (IRSPASSPEQRVAAQSELNRQPRDASAVR).

Belongs to the universal ribosomal protein uS14 family. As to quaternary structure, part of the 30S ribosomal subunit. Contacts proteins S3 and S10.

Its function is as follows. Binds 16S rRNA, required for the assembly of 30S particles and may also be responsible for determining the conformation of the 16S rRNA at the A site. The polypeptide is Small ribosomal subunit protein uS14A (Mycobacteroides abscessus (strain ATCC 19977 / DSM 44196 / CCUG 20993 / CIP 104536 / JCM 13569 / NCTC 13031 / TMC 1543 / L948) (Mycobacterium abscessus)).